Consider the following 275-residue polypeptide: MSAPCNCTHADSQSLTNTNKSFQHLSPELQKQYSDPQHPANLICELCRLFYDNNWVTGTGGGISIRDVEGSNPNLVYIAPSGVQKERIQPWEMFLVELPDEKLLQTPNDIPKELTKSYKYKPSACTPLFMSCYKMRDAGACIHTHSQNAVMITLLLEGQKEFKISHIEQIKALPKLKYNEETKKVEKIGSLEYYDTLTIPIIENTPHEEDLTDSLQEAIRNYPGTSAVLVRRHGIYVWGETVWKAKVYNEAIDYLLELAIKMRQTGIPLVKNTST.

Cys-125 is a binding site for substrate. 2 residues coordinate Zn(2+): His-143 and His-145. The Proton donor/acceptor role is filled by Glu-168. His-233 contacts Zn(2+).

It belongs to the aldolase class II family. MtnB subfamily. It depends on Zn(2+) as a cofactor.

Its subcellular location is the cytoplasm. The enzyme catalyses 5-(methylsulfanyl)-D-ribulose 1-phosphate = 5-methylsulfanyl-2,3-dioxopentyl phosphate + H2O. It functions in the pathway amino-acid biosynthesis; L-methionine biosynthesis via salvage pathway; L-methionine from S-methyl-5-thio-alpha-D-ribose 1-phosphate: step 2/6. Catalyzes the dehydration of methylthioribulose-1-phosphate (MTRu-1-P) into 2,3-diketo-5-methylthiopentyl-1-phosphate (DK-MTP-1-P). The sequence is that of Methylthioribulose-1-phosphate dehydratase from Lodderomyces elongisporus (strain ATCC 11503 / CBS 2605 / JCM 1781 / NBRC 1676 / NRRL YB-4239) (Yeast).